The chain runs to 365 residues: 3-isopropylmalate dehydrogenase (365 aa).

Residue 78–89 participates in NAD(+) binding; sequence GPKWGTGKVRPE. Substrate contacts are provided by Arg-96, Arg-106, Arg-135, and Asp-224. Residues Asp-224, Asp-249, and Asp-253 each coordinate Mg(2+). Residue 289–301 coordinates NAD(+); that stretch reads GSAPDISGKGIVN.

Belongs to the isocitrate and isopropylmalate dehydrogenases family. In terms of assembly, homodimer. Mg(2+) serves as cofactor. Requires Mn(2+) as cofactor.

It localises to the cytoplasm. The catalysed reaction is (2R,3S)-3-isopropylmalate + NAD(+) = 4-methyl-2-oxopentanoate + CO2 + NADH. Its pathway is amino-acid biosynthesis; L-leucine biosynthesis; L-leucine from 3-methyl-2-oxobutanoate: step 3/4. Functionally, catalyzes the oxidation of 3-carboxy-2-hydroxy-4-methylpentanoate (3-isopropylmalate) to 3-carboxy-4-methyl-2-oxopentanoate. The product decarboxylates to 4-methyl-2 oxopentanoate. The sequence is that of 3-isopropylmalate dehydrogenase (LEUC) from Zymoseptoria tritici (Speckled leaf blotch fungus).